The sequence spans 207 residues: Histone H1 (207 aa).

Residues 1-15 (MAEVAPAPAAAAPAK) show a composition bias toward low complexity. Disordered stretches follow at residues 1–28 (MAEV…PKKA) and 105–207 (EAKK…PKKK). An N-acetylalanine modification is found at Ala2. Over residues 16 to 27 (APKKKAAAKPKK) the composition is skewed to basic residues. In terms of domain architecture, H15 spans 28–101 (AGPSVGELIV…GASGSFKLNK (74 aa)). 2 stretches are compositionally biased toward basic residues: residues 117–168 (KAKK…KVKK) and 175–207 (KAAK…PKKK).

Belongs to the histone H1/H5 family. As to expression, oncorhyncin II is expressed in skin.

Its subcellular location is the nucleus. It localises to the chromosome. The protein resides in the secreted. Histones H1 are necessary for the condensation of nucleosome chains into higher-order structures. Its function is as follows. Oncorhyncin II has antibacterial activity against Gram-positive and Gram-negative bacteria at submicromolar concentrations. Potentially important role in mucosal defense. This chain is Histone H1, found in Oncorhynchus mykiss (Rainbow trout).